The chain runs to 557 residues: Urocanate hydratase (557 aa).

Residues 53–54 (GG), glutamine 131, 177–179 (GMG), glutamate 197, arginine 202, 243–244 (NA), 264–268 (QTSAH), 274–275 (YL), and tyrosine 323 each bind NAD(+). Cysteine 411 is an active-site residue. NAD(+) is bound at residue glycine 493.

Belongs to the urocanase family. The cofactor is NAD(+).

The protein resides in the cytoplasm. It carries out the reaction 4-imidazolone-5-propanoate = trans-urocanate + H2O. The protein operates within amino-acid degradation; L-histidine degradation into L-glutamate; N-formimidoyl-L-glutamate from L-histidine: step 2/3. Functionally, catalyzes the conversion of urocanate to 4-imidazolone-5-propionate. This is Urocanate hydratase from Pseudomonas entomophila (strain L48).